A 299-amino-acid polypeptide reads, in one-letter code: MTFKSGFVAILGRPNVGKSTFLNHVMGQXIAIMXDKAXTTRNKIMGIYTTDKEQIVFIDTPGIHKPKTALGDFMVESAYSTLREVDTVLFMVPADEARGKGDDMIIERLKAAKVPVILVVNKIDKVHPDQLLSQIDDFRNQMDFKEIVPISALQGNNVSRLVDILSENLDEGFQYFPSDQITDHPERFLVSEMVREKVLHLTREEIPHSVAVVVDSMKRDEETDKVHIRATIMVERDSQKGIIIGKGGAMLKKIGSMARRDIELMLGDKVFLETWVKVKKNWRDKKLDLADFGYNEREY.

The 168-residue stretch at 4 to 171 (KSGFVAILGR…VDILSENLDE (168 aa)) folds into the Era-type G domain. A G1 region spans residues 12 to 19 (GRPNVGKS). 12-19 (GRPNVGKS) provides a ligand contact to GTP. Residues 38–42 (XTTRN) are G2. Residues 59–62 (DTPG) form a G3 region. Residues 59–63 (DTPGI) and 121–124 (NKID) contribute to the GTP site. A G4 region spans residues 121 to 124 (NKID). The tract at residues 150–152 (ISA) is G5. The KH type-2 domain maps to 202–280 (TREEIPHSVA…FLETWVKVKK (79 aa)).

This sequence belongs to the TRAFAC class TrmE-Era-EngA-EngB-Septin-like GTPase superfamily. Era GTPase family. In terms of assembly, monomer.

The protein resides in the cytoplasm. The protein localises to the cell membrane. Functionally, an essential GTPase that binds both GDP and GTP, with rapid nucleotide exchange. Plays a role in 16S rRNA processing and 30S ribosomal subunit biogenesis and possibly also in cell cycle regulation and energy metabolism. The protein is GTPase Era of Streptococcus pneumoniae serotype 19F (strain G54).